Consider the following 156-residue polypeptide: Small ribosomal subunit protein uS7 (156 aa).

It belongs to the universal ribosomal protein uS7 family. Part of the 30S ribosomal subunit. Contacts proteins S9 and S11.

Its function is as follows. One of the primary rRNA binding proteins, it binds directly to 16S rRNA where it nucleates assembly of the head domain of the 30S subunit. Is located at the subunit interface close to the decoding center, probably blocks exit of the E-site tRNA. The chain is Small ribosomal subunit protein uS7 from Kocuria rhizophila (strain ATCC 9341 / DSM 348 / NBRC 103217 / DC2201).